The sequence spans 310 residues: Acetylglutamate kinase (310 aa).

Residues Gly-79 to Gly-80, Arg-101, and Asn-206 contribute to the substrate site.

It belongs to the acetylglutamate kinase family. ArgB subfamily.

The protein resides in the cytoplasm. It catalyses the reaction N-acetyl-L-glutamate + ATP = N-acetyl-L-glutamyl 5-phosphate + ADP. It functions in the pathway amino-acid biosynthesis; L-arginine biosynthesis; N(2)-acetyl-L-ornithine from L-glutamate: step 2/4. Catalyzes the ATP-dependent phosphorylation of N-acetyl-L-glutamate. The protein is Acetylglutamate kinase of Rhodospirillum rubrum (strain ATCC 11170 / ATH 1.1.1 / DSM 467 / LMG 4362 / NCIMB 8255 / S1).